We begin with the raw amino-acid sequence, 298 residues long: Mimecan (298 aa).

The N-terminal stretch at 1–20 (MKTLQSTLLLLLFVPLIKPA) is a signal peptide. N-linked (GlcNAc...) (keratan sulfate) asparagine glycosylation occurs at asparagine 88. LRR repeat units follow at residues 112 to 131 (DAVP…FNKI), 132 to 155 (KKLT…GNLI), 156 to 179 (EDIE…ENQL), 180 to 199 (LKLP…YNKI), 200 to 225 (KSRG…HNAL), 226 to 246 (ESVP…FNNI), and 247 to 277 (ASIT…GNPI). Asparagine 214 is a glycosylation site (N-linked (GlcNAc...) (keratan sulfate) asparagine). Cysteine 255 and cysteine 288 are disulfide-bonded. Asparagine 258 carries an N-linked (GlcNAc...) (keratan sulfate) asparagine glycan.

Belongs to the small leucine-rich proteoglycan (SLRP) family. SLRP class III subfamily. In terms of processing, contains keratan sulfate.

Its subcellular location is the secreted. It is found in the extracellular space. The protein localises to the extracellular matrix. Induces bone formation in conjunction with TGF-beta-1 or TGF-beta-2. The chain is Mimecan (OGN) from Pongo abelii (Sumatran orangutan).